A 441-amino-acid chain; its full sequence is Na(+)/H(+) antiporter NhaA 2 (441 aa).

The next 12 membrane-spanning stretches (helical) occupy residues 34–54, 77–97, 115–135, 146–166, 176–196, 199–219, 225–245, 249–269, 290–310, 317–337, 355–375, and 389–409; these read VGGA…NSPW, LTLG…VVGL, ALPM…FVAV, GWAI…AVIS, FLLT…AVFY, EINL…ALCV, SWWL…ESGV, VAGV…AGGP, VAVP…VSGL, PITL…IFLT, WIDV…SLLI, and FVKV…AVLL.

It belongs to the NhaA Na(+)/H(+) (TC 2.A.33) antiporter family.

It is found in the cell membrane. It catalyses the reaction Na(+)(in) + 2 H(+)(out) = Na(+)(out) + 2 H(+)(in). In terms of biological role, na(+)/H(+) antiporter that extrudes sodium in exchange for external protons. This Mycobacterium sp. (strain MCS) protein is Na(+)/H(+) antiporter NhaA 2.